A 289-amino-acid chain; its full sequence is Trimeric intracellular cation channel type B (289 aa).

Over 1 to 18 (MDVFAFFNLNELAFGLSK) the chain is Lumenal. A helical transmembrane segment spans residues 19-36 (LPMFPYFDMAHYIISVMS). Residues 37–49 (LREQPGALCVSQR) are Cytoplasmic-facing. A helical membrane pass occupies residues 50–73 (SPLACWFSSMLYCFGGAVLSALML). At 74-85 (ADAPVAPLSNTT) the chain is on the lumenal side. The helical transmembrane segment at 86–103 (NLLLATLMWYLVFYCPLD) threads the bilayer. At 104–107 (VVYS) the chain is on the cytoplasmic side. A helical transmembrane segment spans residues 108-125 (LASLLPLRLVLTAMKEVT). A 1,2-diacyl-sn-glycero-3-phospho-(1D-myo-inositol-4,5-bisphosphate) contacts are provided by lysine 122 and arginine 126. Topologically, residues 126–144 (RTWKVLSGVSQAGSKYSDA) are lumenal. A helical transmembrane segment spans residues 145 to 162 (LFVMVAVGWAKGAGGGLI). Residues 163–183 (SNFEQLVRGVWKPETNELLKM) lie on the Cytoplasmic side of the membrane. Residues 184–201 (SYPTKVTLLGAVVFSLQQ) form a helical membrane-spanning segment. Residues 202-210 (CRYLPIQTH) are Lumenal-facing. The helical transmembrane segment at 211-230 (HLTFIYTLFTVTNKTRMMLL) threads the bilayer. Residues 231-289 (GSSSHPLSSLESFLYKTLFVRPLTDLSAEHTHSKHNGSVPEPTTAQTHTKEAEASKKTN) lie on the Cytoplasmic side of the membrane. Residues 260-289 (HTHSKHNGSVPEPTTAQTHTKEAEASKKTN) are disordered. Basic and acidic residues predominate over residues 278 to 289 (HTKEAEASKKTN).

Belongs to the TMEM38 family. Homotrimer; conformation seems to be controled by binding to diacylglycerol (DAG).

The protein localises to the endoplasmic reticulum membrane. It catalyses the reaction K(+)(in) = K(+)(out). Channel activity is activated by increased cytosolic Ca(2+) levels and blocked by luminal high Ca(2+) levels. Its function is as follows. Intracellular monovalent cation channel required for maintenance of rapid intracellular calcium release. Acts as a potassium counter-ion channel that functions in synchronization with calcium release from intracellular stores. Activated by increased cytosolic Ca(2+) levels. The sequence is that of Trimeric intracellular cation channel type B (tmem38b) from Danio rerio (Zebrafish).